The sequence spans 183 residues: Pyruvoyl-dependent arginine decarboxylase 2 (183 aa).

Ser41 is modified (pyruvic acid (Ser)).

Belongs to the PdaD family. The cofactor is pyruvate.

It catalyses the reaction L-arginine + H(+) = agmatine + CO2. The protein is Pyruvoyl-dependent arginine decarboxylase 2 (pdaD2) of Methanosarcina mazei (strain ATCC BAA-159 / DSM 3647 / Goe1 / Go1 / JCM 11833 / OCM 88) (Methanosarcina frisia).